The chain runs to 508 residues: Photosystem II CP47 reaction center protein (508 aa).

6 consecutive transmembrane segments (helical) span residues 21 to 36 (AVHIMHTALVAGWAGS), 101 to 115 (IVFSGLCFLAAIWHW), 140 to 156 (GIHLFLAGVACFGFGAF), 203 to 218 (IAAGTLGILAGLFHLS), 237 to 252 (VLSSSIAAVFFAAFVV), and 457 to 472 (SFALLFFFGHIWHGAR).

Belongs to the PsbB/PsbC family. PsbB subfamily. In terms of assembly, PSII is composed of 1 copy each of membrane proteins PsbA, PsbB, PsbC, PsbD, PsbE, PsbF, PsbH, PsbI, PsbJ, PsbK, PsbL, PsbM, PsbT, PsbX, PsbY, PsbZ, Psb30/Ycf12, at least 3 peripheral proteins of the oxygen-evolving complex and a large number of cofactors. It forms dimeric complexes. It depends on Binds multiple chlorophylls. PSII binds additional chlorophylls, carotenoids and specific lipids. as a cofactor.

The protein resides in the plastid. It localises to the chloroplast thylakoid membrane. Its function is as follows. One of the components of the core complex of photosystem II (PSII). It binds chlorophyll and helps catalyze the primary light-induced photochemical processes of PSII. PSII is a light-driven water:plastoquinone oxidoreductase, using light energy to abstract electrons from H(2)O, generating O(2) and a proton gradient subsequently used for ATP formation. The protein is Photosystem II CP47 reaction center protein of Trachelium caeruleum (Blue throatwort).